We begin with the raw amino-acid sequence, 66 residues long: Large ribosomal subunit protein bL35 (66 aa).

This sequence belongs to the bacterial ribosomal protein bL35 family.

The chain is Large ribosomal subunit protein bL35 from Ruegeria pomeroyi (strain ATCC 700808 / DSM 15171 / DSS-3) (Silicibacter pomeroyi).